A 202-amino-acid polypeptide reads, in one-letter code: FMN-dependent NADH:quinone oxidoreductase 2 (202 aa).

FMN contacts are provided by residues Ser-9, 15 to 17 (SAS), and 95 to 98 (MWNL).

This sequence belongs to the azoreductase type 1 family. In terms of assembly, homodimer. It depends on FMN as a cofactor.

The enzyme catalyses 2 a quinone + NADH + H(+) = 2 a 1,4-benzosemiquinone + NAD(+). The catalysed reaction is N,N-dimethyl-1,4-phenylenediamine + anthranilate + 2 NAD(+) = 2-(4-dimethylaminophenyl)diazenylbenzoate + 2 NADH + 2 H(+). Quinone reductase that provides resistance to thiol-specific stress caused by electrophilic quinones. In terms of biological role, also exhibits azoreductase activity. Catalyzes the reductive cleavage of the azo bond in aromatic azo compounds to the corresponding amines. This Hahella chejuensis (strain KCTC 2396) protein is FMN-dependent NADH:quinone oxidoreductase 2.